Consider the following 161-residue polypeptide: Alpha-crystallin A chain (161 aa).

Met-1 carries the post-translational modification N-acetylmethionine. Positions 1–53 are required for complex formation with BFSP1 and BFSP2; it reads MDVTIQHPWFKRALGPFYHNRLFDQFFGEGLFEYDLLPFQSLFRTVLDSGISE. A deamidated glutamine; partial mark is found at Gln-6 and Gln-40. One can recognise a sHSP domain in the interval 41–150; the sequence is SLFRTVLDSG…SHSERAIPVS (110 aa). Lys-87 is subject to N6-acetyllysine. Zn(2+) is bound at residue His-88. Asn-89 carries the post-translational modification Deamidated asparagine; partial. 2 residues coordinate Zn(2+): Glu-90 and His-95. Ser-110 carries the phosphoserine modification. Asn-111 bears the Deamidated asparagine; partial mark. Residues Cys-119 and Cys-130 are joined by a disulfide bond. Residue Gln-135 is modified to Deamidated glutamine; partial. The disordered stretch occupies residues 135–161; the sequence is QSGMDASHSERAIPVSREEKASSAPNS. A compositionally biased stretch (basic and acidic residues) spans 141–155; the sequence is SHSERAIPVSREEKA. His-142 is a Zn(2+) binding site. The O-linked (GlcNAc) serine glycan is linked to Ser-150.

The protein belongs to the small heat shock protein (HSP20) family. In terms of assembly, heteromer composed of three CRYAA and one CRYAB subunits. Inter-subunit bridging via zinc ions enhances stability, which is crucial as there is no protein turn over in the lens. Can also form homodimers and homotetramers (dimers of dimers) which serve as the building blocks of homooligomers. Within homooligomers, the zinc-binding motif is created from residues of 3 different molecules. His-88 and Glu-90 from one molecule are ligands of the zinc ion, and His-95 and His-142 residues from additional molecules complete the site with tetrahedral coordination geometry. Part of a complex required for lens intermediate filament formation composed of BFSP1, BFSP2 and CRYAA. Undergoes age-dependent proteolytical cleavage at the C-terminus.

Its subcellular location is the cytoplasm. It is found in the nucleus. Its function is as follows. Contributes to the transparency and refractive index of the lens. In its oxidized form (absence of intramolecular disulfide bond), acts as a chaperone, preventing aggregation of various proteins under a wide range of stress conditions. Required for the correct formation of lens intermediate filaments as part of a complex composed of BFSP1, BFSP2 and CRYAA. The protein is Alpha-crystallin A chain (CRYAA) of Trichechus inunguis (Amazon manatee).